Reading from the N-terminus, the 206-residue chain is Recombination protein RecR (206 aa).

The C4-type zinc finger occupies 58 to 73 (CNICGYITEKNICNFC). The Toprim domain maps to 81 to 178 (STIMIVADNR…KITKLAYGIP (98 aa)).

It belongs to the RecR family.

Functionally, may play a role in DNA repair. It seems to be involved in an RecBC-independent recombinational process of DNA repair. It may act with RecF and RecO. The protein is Recombination protein RecR of Phytoplasma mali (strain AT).